The primary structure comprises 352 residues: MSVPDRKRALEAAIAYIEKQFGAGSIMSLGKHSSAHEISTIKTGALSLDLALGIGGVPKGRIVEIFGPESSGKTTLATHIVANAQKMGGVAAYIDAEHALDPNYAALIGANINDLMISQPDCGEDALSIAELLARSGAVDVIVIDSVAALVPKSELEGEIGDVHVGLQARMMSQALRKLTATLARTNTCAIFINQIREKIGVSFGNPETTTGGRALKFYSSIRIDIRRIGSIKGGENFDIGNRIKVKVAKNKLAPPFRTAEFDILFNEGISSAGCIIDLAVEKNIIDKKGSWFNYQDRKLGQGREAVREELKRNKELFHELERRIYESVQASQVPAAACVDAESREVAEAAK.

67–74 (GPESSGKT) is an ATP binding site.

The protein belongs to the RecA family.

It is found in the cytoplasm. Its function is as follows. Can catalyze the hydrolysis of ATP in the presence of single-stranded DNA, the ATP-dependent uptake of single-stranded DNA by duplex DNA, and the ATP-dependent hybridization of homologous single-stranded DNAs. It interacts with LexA causing its activation and leading to its autocatalytic cleavage. The protein is Protein RecA of Chlamydia trachomatis serovar D (strain ATCC VR-885 / DSM 19411 / UW-3/Cx).